Consider the following 125-residue polypeptide: Holo-[acyl-carrier-protein] synthase (125 aa).

Residues Asp-8 and Glu-57 each coordinate Mg(2+).

This sequence belongs to the P-Pant transferase superfamily. AcpS family. Mg(2+) serves as cofactor.

The protein resides in the cytoplasm. The catalysed reaction is apo-[ACP] + CoA = holo-[ACP] + adenosine 3',5'-bisphosphate + H(+). In terms of biological role, transfers the 4'-phosphopantetheine moiety from coenzyme A to a Ser of acyl-carrier-protein. In Laribacter hongkongensis (strain HLHK9), this protein is Holo-[acyl-carrier-protein] synthase.